The following is a 328-amino-acid chain: Tetraacyldisaccharide 4'-kinase (328 aa).

Residue 59-66 (TAGGNGKT) participates in ATP binding.

This sequence belongs to the LpxK family.

The enzyme catalyses a lipid A disaccharide + ATP = a lipid IVA + ADP + H(+). It functions in the pathway glycolipid biosynthesis; lipid IV(A) biosynthesis; lipid IV(A) from (3R)-3-hydroxytetradecanoyl-[acyl-carrier-protein] and UDP-N-acetyl-alpha-D-glucosamine: step 6/6. Transfers the gamma-phosphate of ATP to the 4'-position of a tetraacyldisaccharide 1-phosphate intermediate (termed DS-1-P) to form tetraacyldisaccharide 1,4'-bis-phosphate (lipid IVA). The protein is Tetraacyldisaccharide 4'-kinase of Aliivibrio fischeri (strain ATCC 700601 / ES114) (Vibrio fischeri).